A 107-amino-acid chain; its full sequence is High mobility group protein HMG-I/HMG-Y (107 aa).

The segment covering 1-13 (MSESVSKSSQPLA) has biased composition (polar residues). The interval 1-107 (MSESVSKSSQ…ISQESSEEEQ (107 aa)) is disordered. Position 2 is an N-acetylserine (S2). Residue K7 is modified to N6-acetyllysine. The residue at position 8 (S8) is an ADP-ribosylserine. S9 is subject to ADP-ribosylserine; alternate. S9 bears the Phosphoserine; alternate mark. K15 is modified (N6-acetyllysine; alternate). K15 participates in a covalent cross-link: Glycyl lysine isopeptide (Lys-Gly) (interchain with G-Cter in SUMO2); alternate. A compositionally biased stretch (basic and acidic residues) spans 15-24 (KQEKDGTEKR). The segment at residues 21 to 31 (TEKRGRGRPRK) is a DNA-binding region (a.T hook 1). At R26 the chain carries Asymmetric dimethylarginine; alternate. R26 is subject to Omega-N-methylarginine; alternate. R26 carries the symmetric dimethylarginine; alternate modification. At S36 the chain carries Phosphoserine; by HIPK2 and CDC2. The residue at position 39 (T39) is a Phosphothreonine. S44 and S49 each carry phosphoserine. T53 carries the phosphothreonine; by HIPK2 and CDC2 modification. 2 consecutive DNA-binding regions (a.T hook) follow at residues 53 to 63 (TPKRPRGRPKG) and 78 to 89 (TPGRKPRGRPKK). The tract at residues 53–77 (TPKRPRGRPKGSKNKGTAKTRKVTT) is interaction with HIPK2. Residues 55-74 (KRPRGRPKGSKNKGTAKTRK) are compositionally biased toward basic residues. Residues R58 and R60 each carry the asymmetric dimethylarginine; by PRMT6; alternate modification. Residues R58 and R60 each carry the omega-N-methylarginine; by PRMT6; alternate modification. T78 is subject to Phosphothreonine; by HIPK2 and CDC2. Positions 93–107 (EEEEGISQESSEEEQ) are enriched in acidic residues. S99, S102, and S103 each carry phosphoserine.

Belongs to the HMGA family. Interacts with HIPK2. Isoforms HMG-I and HMG-Y can be phosphorylated by HIPK2. Phosphorylation may modulate DNA-binding affinity. In terms of processing, methylation at Arg-58 is mutually exclusive with methylation at Arg-60.

It localises to the nucleus. The protein localises to the chromosome. Functionally, HMG-I/Y bind preferentially to the minor groove of A+T rich regions in double-stranded DNA. It is suggested that these proteins could function in nucleosome phasing and in the 3'-end processing of mRNA transcripts. They are also involved in the transcription regulation of genes containing, or in close proximity to A+T-rich regions. This is High mobility group protein HMG-I/HMG-Y (Hmga1) from Rattus norvegicus (Rat).